A 1115-amino-acid polypeptide reads, in one-letter code: Gamma tubulin complex adapter mto1 (1115 aa).

Positions 25–180 (LTDEEVRRIL…NYISSSLDQL (156 aa)) are disordered. Basic and acidic residues-rich tracts occupy residues 28–41 (EEVRRILSPRKEGS) and 56–71 (EASHKYDFEIDRDSLK). Composition is skewed to polar residues over residues 72–102 (SDSGSPRLHQNATAPTSSTPLQSPDESVNKL), 119–130 (DTTNFDRLNDNI), and 139–151 (PVLTANQGFQSQE). Ser-94 is modified (phosphoserine). Positions 165–176 (SDPSSPNYISSS) are enriched in low complexity. Residues 445 to 915 (NEALLLRKQE…ERNSLIKNIV (471 aa)) are a coiled coil. A required for interaction with mto2 region spans residues 523–537 (LMRMEQQWREDVDQL). Positions 1001-1011 (GSTSSIPNSPR) are enriched in polar residues. 2 disordered regions span residues 1001–1037 (GSTSSIPNSPRASKRVSLDSEDKKLVPASPDKSAVQR) and 1067–1115 (EQEG…QEHK). Residues Ser-1005 and Ser-1009 each carry the phosphoserine modification. Basic and acidic residues-rich tracts occupy residues 1016–1025 (VSLDSEDKKL) and 1067–1084 (EQEGRKRDKLGARERLQD). A coiled-coil region spans residues 1072–1102 (KRDKLGARERLQDLIRQNRSLSRQIKTDKES). 2 stretches are compositionally biased toward polar residues: residues 1086–1095 (IRQNRSLSRQ) and 1104–1115 (SRSPSISSQEHK).

As to quaternary structure, interacts with mto2; the interaction is direct and required for efficient binding to the gamma-tubulin complex. Interacts with gamma tubulin complex subunits alp4, alp6 and gtb1. Interacts with mcp6.

Its subcellular location is the cytoplasm. The protein resides in the cytoskeleton. It is found in the microtubule organizing center. It localises to the spindle pole body. Functionally, spindle pole body (SPB) component that acts as the gamma-tubulin complex-binding protein of the SPB outer plaque. Promotes nucleation of all cytoplasmic microtubules by recruiting the gamma-tubulin complex to the spindle pole body (SPB), to the interphase microtubule organizing center (iMTOC), and to the equatorial MTOC (eMTOC) during anaphase. This is Gamma tubulin complex adapter mto1 from Schizosaccharomyces pombe (strain 972 / ATCC 24843) (Fission yeast).